Here is a 335-residue protein sequence, read N- to C-terminus: GTPase Obg (335 aa).

The region spanning 4-162 (GNFVDYTKIY…ADIVLELKVL (159 aa)) is the Obg domain. Residues 163 to 332 (ADVGLVGFPN…LKDKLWAMLN (170 aa)) form the OBG-type G domain. Residues 169–176 (GFPNAGKS), 194–198 (FTTLK), 216–219 (DIPG), 283–286 (SKCD), and 313–315 (SSI) contribute to the GTP site. Residues serine 176 and threonine 196 each coordinate Mg(2+).

It belongs to the TRAFAC class OBG-HflX-like GTPase superfamily. OBG GTPase family. Monomer. The cofactor is Mg(2+).

It is found in the cytoplasm. Its function is as follows. An essential GTPase which binds GTP, GDP and possibly (p)ppGpp with moderate affinity, with high nucleotide exchange rates and a fairly low GTP hydrolysis rate. Plays a role in control of the cell cycle, stress response, ribosome biogenesis and in those bacteria that undergo differentiation, in morphogenesis control. This is GTPase Obg from Flavobacterium psychrophilum (strain ATCC 49511 / DSM 21280 / CIP 103535 / JIP02/86).